The following is a 509-amino-acid chain: MDIRAAEISAILKEQIKNFGQEAEVTEVGQVLSVGDGIARVYGLDKVQAGEMVEFESGVRGMALNLEQDNVGVVIFGVDRDIKEGQTVKRTGAIVDVPVGKGLLGRVVDALGNPIDGKGPIVASERRRVDVKAPGIIPRKSVHEPMATGLKSVDALIPIGRGQRELIIGDRQTGKTAIALDTILNQKPAHEGSDEKAKLYCVYVAVGQKRSTVAQFVKVLEDNGALEYSIVIAATASDPAPMQFLAPFSGCAMGEFFRDNGMHAVIIYDDLSKQAVAYRQMSLLLRRPPGREAYPGDVFYLHSRLLERAAKMGDAAGAGSLTALPVIETQANDVSAYIPTNVISITDGQIFLETDLFYQGVRPAVNVGLSVSRVGSAAQTKAMKKVAGKIKGELAQYREMAAFAQFGSDLDAATQRLLNRGSRLTELLKQPQFSPLKMEEQVAVIYAGVNGYLDPIPVNRVRAFEDGLLATLRGKHADLLEAIRASKDLSDESAAKLKGVVEAFAKSFG.

ATP is bound at residue G169–T176.

It belongs to the ATPase alpha/beta chains family. F-type ATPases have 2 components, CF(1) - the catalytic core - and CF(0) - the membrane proton channel. CF(1) has five subunits: alpha(3), beta(3), gamma(1), delta(1), epsilon(1). CF(0) has three main subunits: a(1), b(2) and c(9-12). The alpha and beta chains form an alternating ring which encloses part of the gamma chain. CF(1) is attached to CF(0) by a central stalk formed by the gamma and epsilon chains, while a peripheral stalk is formed by the delta and b chains.

It is found in the cell inner membrane. It catalyses the reaction ATP + H2O + 4 H(+)(in) = ADP + phosphate + 5 H(+)(out). Functionally, produces ATP from ADP in the presence of a proton gradient across the membrane. The alpha chain is a regulatory subunit. The protein is ATP synthase subunit alpha of Methylobacterium nodulans (strain LMG 21967 / CNCM I-2342 / ORS 2060).